The following is a 249-amino-acid chain: Pyridoxamine 5'-phosphate oxidase family protein ustO (249 aa).

21–24 (LFFV) is a binding site for substrate. Residues 76–81 (ATVMFC), 91–92 (RL), Arg-105, and 163–164 (RL) contribute to the FMN site. Residue 215-217 (ASY) participates in substrate binding. Residues 227 to 247 (TGMALMFLVMVVAQWVGYVLY) form a helical membrane-spanning segment.

This sequence belongs to the pyridoxamine 5'-phosphate oxidase family. Requires FMN as cofactor.

The protein resides in the membrane. Its pathway is mycotoxin biosynthesis. In terms of biological role, pyridoxamine 5'-phosphate oxidase family protein; part of the gene cluster that mediates the biosynthesis of the secondary metabolite ustiloxin B, an antimitotic tetrapeptide. First, ustA is processed by the subtilisin-like endoprotease Kex2 that is outside the ustiloxin B gene cluster, at the C-terminal side of Arg-Lys, after transfer to Golgi apparatus through the endoplasmic reticulum (ER). Cleavage by KEX2 generates 16 peptides YAIG-I to YAIG-XVI. To process the precursor peptide further, at least two peptidases are necessary to cleave the N-terminal and C-terminal sides of the Tyr-Ala-Ile-Gly core peptide which serves as backbone for the synthesis of ustiloxin B, through cyclization and modification of the tyrosine with a non-protein coding amino acid, norvaline. One of the two peptidases must be the serine peptidase ustP; and the other pepdidase is probably ustH. Macrocyclization of the core peptide derived from ustA requires the tyrosinase ustQ, as well as the homologous oxidases ustYa and ustYb, and leads to the production of the first cyclization product N-desmethylustiloxin F. For the formation of N-desmethylustiloxin F, three oxidation steps are required, hydroxylation at the benzylic position, hydroxylation at either the aromatic ring of Tyr or beta-position of Ile, and oxidative cyclization. UstQ may catalyze the oxidation of a phenol moiety, whereas the ustYa and ustYb are most likely responsible for the remaining two-step oxidations. N-desmethylustiloxin F is then methylated by ustM to yield ustiloxin F which in turn substrate of the cytochrome P450 monooxygenase ustC which catalyzes the formation of S-deoxyustiloxin H. The flavoprotein monooxygenases ustF1 and ustF2 then participate in the modification of the side chain of S-deoxyustiloxin H, leading to the synthesis of an oxime intermediate, via ustiloxin H. Finally, carboxylative dehydration performed by the cysteine desulfurase-like protein ustD yields ustiloxin B. This Aspergillus flavus (strain ATCC 200026 / FGSC A1120 / IAM 13836 / NRRL 3357 / JCM 12722 / SRRC 167) protein is Pyridoxamine 5'-phosphate oxidase family protein ustO.